Consider the following 213-residue polypeptide: 3-oxoadipate CoA-transferase subunit B (213 aa).

The active site involves glutamate 50.

Belongs to the 3-oxoacid CoA-transferase subunit B family. In terms of assembly, heterodimer.

It catalyses the reaction 3-oxoadipate + succinyl-CoA = 3-oxoadipyl-CoA + succinate. It participates in aromatic compound metabolism; beta-ketoadipate pathway; acetyl-CoA and succinyl-CoA from 3-oxoadipate: step 1/2. This is 3-oxoadipate CoA-transferase subunit B (pcaJ) from Pseudomonas putida (strain ATCC 47054 / DSM 6125 / CFBP 8728 / NCIMB 11950 / KT2440).